A 255-amino-acid chain; its full sequence is Ornithine decarboxylase antizyme (255 aa).

This sequence belongs to the ODC antizyme family. Interacts with ODC and thereby sterically blocks ODC homodimerization.

Functionally, ornithine decarboxylase (ODC) antizyme protein that negatively regulates ODC activity and intracellular polyamine biosynthesis in response to increased intracellular polyamine levels. Binds to ODC monomers, inhibiting the assembly of the functional ODC homodimer, and targets the monomers for ubiquitin-independent proteolytic destruction by the 26S proteasome. This is Ornithine decarboxylase antizyme (OAZ1) from Eremothecium gossypii (strain ATCC 10895 / CBS 109.51 / FGSC 9923 / NRRL Y-1056) (Yeast).